A 565-amino-acid polypeptide reads, in one-letter code: Thiol:disulfide interchange protein DsbD (565 aa).

The N-terminal stretch at 1–19 (MAQRIFTLILLLCSTSVFA) is a signal peptide. 2 disulfides stabilise this stretch: C122/C128 and C182/C304. The next 7 membrane-spanning stretches (helical) occupy residues 163–183 (LPFSALWALLIGIGIAFTPCV), 208–228 (LLTFIYVQGMALTYTALGLVV), 243–263 (YVLIGLAIVFTLLAMSMFGLF), 289–309 (GVFIMGAIAGLICSPCTTAPL), 323–343 (WLGGGTLYLYALGMGLPLMLI), 357–377 (WMEQVKTAFGFVILALPVFLL), and 384–404 (IWGLRLWSALGVAFFGWAFIT). Residues 434–565 (WAFGETHTAQ…FSAHLRDRQP (132 aa)) enclose the Thioredoxin domain. C480 and C483 form a disulfide bridge.

It belongs to the thioredoxin family. DsbD subfamily.

Its subcellular location is the cell inner membrane. It carries out the reaction [protein]-dithiol + NAD(+) = [protein]-disulfide + NADH + H(+). It catalyses the reaction [protein]-dithiol + NADP(+) = [protein]-disulfide + NADPH + H(+). Functionally, required to facilitate the formation of correct disulfide bonds in some periplasmic proteins and for the assembly of the periplasmic c-type cytochromes. Acts by transferring electrons from cytoplasmic thioredoxin to the periplasm. This transfer involves a cascade of disulfide bond formation and reduction steps. This Escherichia coli O6:K15:H31 (strain 536 / UPEC) protein is Thiol:disulfide interchange protein DsbD.